The chain runs to 172 residues: 3-hydroxydecanoyl-[acyl-carrier-protein] dehydratase (172 aa).

Histidine 71 is a catalytic residue.

This sequence belongs to the thioester dehydratase family. FabA subfamily. As to quaternary structure, homodimer.

It localises to the cytoplasm. It catalyses the reaction a (3R)-hydroxyacyl-[ACP] = a (2E)-enoyl-[ACP] + H2O. The catalysed reaction is (3R)-hydroxydecanoyl-[ACP] = (2E)-decenoyl-[ACP] + H2O. It carries out the reaction (2E)-decenoyl-[ACP] = (3Z)-decenoyl-[ACP]. Its pathway is lipid metabolism; fatty acid biosynthesis. Its function is as follows. Necessary for the introduction of cis unsaturation into fatty acids. Catalyzes the dehydration of (3R)-3-hydroxydecanoyl-ACP to E-(2)-decenoyl-ACP and then its isomerization to Z-(3)-decenoyl-ACP. Can catalyze the dehydratase reaction for beta-hydroxyacyl-ACPs with saturated chain lengths up to 16:0, being most active on intermediate chain length. The polypeptide is 3-hydroxydecanoyl-[acyl-carrier-protein] dehydratase (Escherichia coli O127:H6 (strain E2348/69 / EPEC)).